The following is a 417-amino-acid chain: Serine hydroxymethyltransferase (417 aa).

Residues Leu112 and 116 to 118 (GHL) each bind (6S)-5,6,7,8-tetrahydrofolate. Lys221 carries the post-translational modification N6-(pyridoxal phosphate)lysine. A (6S)-5,6,7,8-tetrahydrofolate-binding site is contributed by Glu247.

It belongs to the SHMT family. In terms of assembly, homodimer. Pyridoxal 5'-phosphate serves as cofactor.

The protein localises to the cytoplasm. The enzyme catalyses (6R)-5,10-methylene-5,6,7,8-tetrahydrofolate + glycine + H2O = (6S)-5,6,7,8-tetrahydrofolate + L-serine. It participates in one-carbon metabolism; tetrahydrofolate interconversion. The protein operates within amino-acid biosynthesis; glycine biosynthesis; glycine from L-serine: step 1/1. Functionally, catalyzes the reversible interconversion of serine and glycine with tetrahydrofolate (THF) serving as the one-carbon carrier. This reaction serves as the major source of one-carbon groups required for the biosynthesis of purines, thymidylate, methionine, and other important biomolecules. Also exhibits THF-independent aldolase activity toward beta-hydroxyamino acids, producing glycine and aldehydes, via a retro-aldol mechanism. The chain is Serine hydroxymethyltransferase from Borrelia duttonii (strain Ly).